The following is a 215-amino-acid chain: Pyrrolidone-carboxylate peptidase (215 aa).

Residues glutamate 81, cysteine 144, and histidine 168 contribute to the active site.

It belongs to the peptidase C15 family. In terms of assembly, homotetramer.

It localises to the cytoplasm. The catalysed reaction is Release of an N-terminal pyroglutamyl group from a polypeptide, the second amino acid generally not being Pro.. Its function is as follows. Removes 5-oxoproline from various penultimate amino acid residues except L-proline. The protein is Pyrrolidone-carboxylate peptidase of Bacillus licheniformis (strain ATCC 14580 / DSM 13 / JCM 2505 / CCUG 7422 / NBRC 12200 / NCIMB 9375 / NCTC 10341 / NRRL NRS-1264 / Gibson 46).